Consider the following 316-residue polypeptide: Beta-ketoacyl-[acyl-carrier-protein] synthase III (316 aa).

Residues C112 and H243 contribute to the active site. The tract at residues 244–248 is ACP-binding; sequence QANLR. N273 is a catalytic residue.

It belongs to the thiolase-like superfamily. FabH family. Homodimer.

The protein resides in the cytoplasm. The enzyme catalyses malonyl-[ACP] + acetyl-CoA + H(+) = 3-oxobutanoyl-[ACP] + CO2 + CoA. The protein operates within lipid metabolism; fatty acid biosynthesis. In terms of biological role, catalyzes the condensation reaction of fatty acid synthesis by the addition to an acyl acceptor of two carbons from malonyl-ACP. Catalyzes the first condensation reaction which initiates fatty acid synthesis and may therefore play a role in governing the total rate of fatty acid production. Possesses both acetoacetyl-ACP synthase and acetyl transacylase activities. Its substrate specificity determines the biosynthesis of branched-chain and/or straight-chain of fatty acids. In Haemophilus influenzae (strain 86-028NP), this protein is Beta-ketoacyl-[acyl-carrier-protein] synthase III.